Here is a 586-residue protein sequence, read N- to C-terminus: 2-succinyl-5-enolpyruvyl-6-hydroxy-3-cyclohexene-1-carboxylate synthase (586 aa).

The protein belongs to the TPP enzyme family. MenD subfamily. As to quaternary structure, homodimer. The cofactor is Mg(2+). It depends on Mn(2+) as a cofactor. Requires thiamine diphosphate as cofactor.

The enzyme catalyses isochorismate + 2-oxoglutarate + H(+) = 5-enolpyruvoyl-6-hydroxy-2-succinyl-cyclohex-3-ene-1-carboxylate + CO2. The protein operates within quinol/quinone metabolism; 1,4-dihydroxy-2-naphthoate biosynthesis; 1,4-dihydroxy-2-naphthoate from chorismate: step 2/7. It functions in the pathway cofactor biosynthesis; phylloquinone biosynthesis. Catalyzes the thiamine diphosphate-dependent decarboxylation of 2-oxoglutarate and the subsequent addition of the resulting succinic semialdehyde-thiamine pyrophosphate anion to isochorismate to yield 2-succinyl-5-enolpyruvyl-6-hydroxy-3-cyclohexene-1-carboxylate (SEPHCHC). The sequence is that of 2-succinyl-5-enolpyruvyl-6-hydroxy-3-cyclohexene-1-carboxylate synthase from Acaryochloris marina (strain MBIC 11017).